The chain runs to 608 residues: Phosphogluconate dehydratase (608 aa).

[4Fe-4S] cluster is bound by residues cysteine 154 and cysteine 221.

It belongs to the IlvD/Edd family. The cofactor is [4Fe-4S] cluster.

The enzyme catalyses 6-phospho-D-gluconate = 2-dehydro-3-deoxy-6-phospho-D-gluconate + H2O. The protein operates within carbohydrate metabolism; Entner-Doudoroff pathway. In terms of biological role, catalyzes the dehydration of 6-phospho-D-gluconate to 2-dehydro-3-deoxy-6-phospho-D-gluconate. The sequence is that of Phosphogluconate dehydratase from Helicobacter pylori (strain ATCC 700392 / 26695) (Campylobacter pylori).